Consider the following 443-residue polypeptide: MESLASLYKNHIATLQERTRDALARFKLDALLIHSGELFNVFLDDHPYPFKVNPQFKAWVPVTQVPNCWLLVDGVNKPKLWFYLPVDYWHNVEPLPNSFWTEDVEVIALPKADGIGSLLPAARGNIGYIGPVPERALQLGIEASNINPKGVIDYLHYYRSFKTEYELACMREAQKMAVNGHRAAEEAFRSGMSEFDINIAYLTATGHRDTDVPYSNIVALNEHAAVLHYTKLDHQAPEEMRSFLLDAGAEYNGYAADLTRTWSAKSDNDYAQLVKDVNDEQLALIATMKAGVSYVDYHIQFHQRIAKLLRKHQIITDMSEEAMVENDLTGPFMPHGIGHPLGLQVHDVAGFMQDDSGTHLAAPAKYPYLRCTRILQPGMVLTIEPGIYFIESLLAPWREGQFSKHFNWQKIEALKPFGGIRIEDNVVIHENNVENMTRDLKLA.

Mn(2+) is bound by residues D246, D257, H339, E384, and E423.

It belongs to the peptidase M24B family. Bacterial-type prolidase subfamily. Mn(2+) is required as a cofactor.

It catalyses the reaction Xaa-L-Pro dipeptide + H2O = an L-alpha-amino acid + L-proline. Its function is as follows. Splits dipeptides with a prolyl residue in the C-terminal position. The protein is Xaa-Pro dipeptidase of Escherichia coli (strain SMS-3-5 / SECEC).